Here is a 126-residue protein sequence, read N- to C-terminus: Small ribosomal subunit protein uS11 (126 aa).

The protein belongs to the universal ribosomal protein uS11 family. Part of the 30S ribosomal subunit.

In terms of biological role, located on the platform of the 30S subunit. This is Small ribosomal subunit protein uS11 from Methanosarcina mazei (strain ATCC BAA-159 / DSM 3647 / Goe1 / Go1 / JCM 11833 / OCM 88) (Methanosarcina frisia).